The following is a 262-amino-acid chain: Cell division protein ZapD (262 aa).

It belongs to the ZapD family. Interacts with FtsZ.

It localises to the cytoplasm. Its function is as follows. Cell division factor that enhances FtsZ-ring assembly. Directly interacts with FtsZ and promotes bundling of FtsZ protofilaments, with a reduction in FtsZ GTPase activity. The polypeptide is Cell division protein ZapD (Nitrosomonas europaea (strain ATCC 19718 / CIP 103999 / KCTC 2705 / NBRC 14298)).